The chain runs to 182 residues: Putative manganese efflux pump MntP (182 aa).

The next 6 membrane-spanning stretches (helical) occupy residues Leu-6–Gly-26, Ile-37–Val-57, His-71–Leu-91, Ile-101–Leu-121, Ile-131–Ile-151, and Tyr-162–Ile-182.

This sequence belongs to the MntP (TC 9.B.29) family.

The protein localises to the cell membrane. Probably functions as a manganese efflux pump. This Bacillus cereus (strain ATCC 10987 / NRS 248) protein is Putative manganese efflux pump MntP.